Here is a 250-residue protein sequence, read N- to C-terminus: MNILLSNDDGIYSPGIQKLSKKLKKFLNVQVIAPSCDKSGSSSSLTINNPLKVHKFSNGDITVYSGTPIDCVYLGINFFMKPKPDFVVSGINLGANLGDDVFYSGTVGAAMEGRYLKYSSLAISLDGNKHLDVAVEIVYKFLKFLLNNPFRKKYILNINIPDSPLKYIKGFKITKCGRKNFKNTVIKSKDSENKNIFWIGPKTNCYNESIGTDFHAIKNNYISVTPLLSNLTNNKEINSISNWFENFYKS.

A divalent metal cation contacts are provided by D8, D9, S39, and N92.

This sequence belongs to the SurE nucleotidase family. It depends on a divalent metal cation as a cofactor.

Its subcellular location is the cytoplasm. It carries out the reaction a ribonucleoside 5'-phosphate + H2O = a ribonucleoside + phosphate. The catalysed reaction is a ribonucleoside 3'-phosphate + H2O = a ribonucleoside + phosphate. The enzyme catalyses [phosphate](n) + H2O = [phosphate](n-1) + phosphate + H(+). Functionally, nucleotidase with a broad substrate specificity as it can dephosphorylate various ribo- and deoxyribonucleoside 5'-monophosphates and ribonucleoside 3'-monophosphates with highest affinity to 3'-AMP. Also hydrolyzes polyphosphate (exopolyphosphatase activity) with the preference for short-chain-length substrates (P20-25). Might be involved in the regulation of dNTP and NTP pools, and in the turnover of 3'-mononucleotides produced by numerous intracellular RNases (T1, T2, and F) during the degradation of various RNAs. In Wigglesworthia glossinidia brevipalpis, this protein is 5'/3'-nucleotidase SurE.